Reading from the N-terminus, the 93-residue chain is Small ribosomal subunit protein uS19 (93 aa).

The protein belongs to the universal ribosomal protein uS19 family.

Protein S19 forms a complex with S13 that binds strongly to the 16S ribosomal RNA. The protein is Small ribosomal subunit protein uS19 of Thermoanaerobacter pseudethanolicus (strain ATCC 33223 / 39E) (Clostridium thermohydrosulfuricum).